The following is a 254-amino-acid chain: tRNA pseudouridine synthase A (254 aa).

Aspartate 52 serves as the catalytic Nucleophile. Residue tyrosine 111 coordinates substrate.

It belongs to the tRNA pseudouridine synthase TruA family. Homodimer.

The enzyme catalyses uridine(38/39/40) in tRNA = pseudouridine(38/39/40) in tRNA. Formation of pseudouridine at positions 38, 39 and 40 in the anticodon stem and loop of transfer RNAs. The polypeptide is tRNA pseudouridine synthase A (Methylobacterium nodulans (strain LMG 21967 / CNCM I-2342 / ORS 2060)).